Reading from the N-terminus, the 287-residue chain is Elongation factor Ts (287 aa).

The segment at 80–83 is involved in Mg(2+) ion dislocation from EF-Tu; the sequence is TDFL.

It belongs to the EF-Ts family.

It is found in the cytoplasm. Its function is as follows. Associates with the EF-Tu.GDP complex and induces the exchange of GDP to GTP. It remains bound to the aminoacyl-tRNA.EF-Tu.GTP complex up to the GTP hydrolysis stage on the ribosome. The chain is Elongation factor Ts from Pseudomonas fluorescens (strain SBW25).